Reading from the N-terminus, the 312-residue chain is Protoheme IX farnesyltransferase (312 aa).

The next 8 helical transmembrane spans lie at 12-32, 41-61, 93-113, 114-134, 141-161, 168-188, 240-260, and 290-310; these read LALT…PAML, FGLI…ANTF, VFAW…CHSW, LAAG…TKWL, NVIW…AVIT, FHAG…IFFW, VPAA…WFII, and ILFV…AHAV.

Belongs to the UbiA prenyltransferase family. Protoheme IX farnesyltransferase subfamily.

The protein resides in the cell membrane. The enzyme catalyses heme b + (2E,6E)-farnesyl diphosphate + H2O = Fe(II)-heme o + diphosphate. It participates in porphyrin-containing compound metabolism; heme O biosynthesis; heme O from protoheme: step 1/1. Functionally, converts heme B (protoheme IX) to heme O by substitution of the vinyl group on carbon 2 of heme B porphyrin ring with a hydroxyethyl farnesyl side group. The sequence is that of Protoheme IX farnesyltransferase from Corynebacterium jeikeium (strain K411).